Consider the following 211-residue polypeptide: Thymidylate kinase (211 aa).

Residue Gly-10–Thr-17 participates in ATP binding.

It belongs to the thymidylate kinase family.

The enzyme catalyses dTMP + ATP = dTDP + ADP. Functionally, phosphorylation of dTMP to form dTDP in both de novo and salvage pathways of dTTP synthesis. The chain is Thymidylate kinase (tmk) from Lactococcus lactis subsp. lactis (strain IL1403) (Streptococcus lactis).